A 201-amino-acid polypeptide reads, in one-letter code: uncharacterized protein (201 aa).

2 disordered regions span residues 46 to 80 (PLVNPKYDNPQIESAELDGSQNDNYSTDTSQSYDE) and 143 to 201 (SSTS…ANPA). Polar residues-rich tracts occupy residues 64–78 (GSQNDNYSTDTSQSY) and 143–167 (SSTSAKTIQNDKPATDVSLGSNSPA).

This is an uncharacterized protein from Legionella pneumophila.